The following is a 930-amino-acid chain: MKLKDTLNLGKTEFPMRAGLPTKEPVWQKEWEDAKLYQRRQELNQGKPHFTLHDGPPYANGNIHVGHAMNKISKDIIVRSKSMSGFYAPFIPGWDTHGLPIEQVLSKQGVKRKEMDLVEYLKLCREYALSQVDKQREDFKRLGVSGDWENPYVTLTPDYEAAQIRVFGEMANKGYIYRGAKPVYWSWSSESALAEAEIEYHDLVSTSLYYANKVKDGKGVLDTDTYIVVWTTTPFTITASRGLTVGADIDYVLVQPVGEARKFVVAAELLTSLSEKFGWADVQVLETYRGQELNHIVTEHPWDTAVEELVILGDHVTTDSGTGIVHTAPGFGEDDYNVGIANNLEVAVTVDERGIMMKNAGPEFEGQFYEKVVPTVIEKLGNLLLAQEEISHSYPFDWRTKKPIIWRAVPQWFASVSKFRQEILDEIEKVKFHSEWGKVRLYNMIRDRGDWVISRQRTWGVPLPIFYAEDGTAIMVAETIEHVAQLFEKHGSSIWWERDAKDLLPEGFTHPGSPNGEFKKETDIMDVWFDSGSSWNGVVVNRPELTYPADLYLEGSDQYRGWFNSSLITSVANHGVAPYKQILSQGFALDGKGEKMSKSLGNTIAPSDVEKQFGAEILRLWVTSVDSSNDVRISMDILSQVSETYRKIRNTLRFLIANTSDFNPAQDTVAYDELRSVDKYMTIRFNQLVKTIRDAYADFEFLTIYKALVNFINVDLSAFYLDFAKDVVYIEGAKSLERRQMQTVFYDILVKITKLLTPILPHTAEEIWSYLEFETEDFVQLSELPEVQTFANQEEILDTWAAFMDFRGQAQKALEEARNAKVIGKSLEAHLTVYPNEVVKTLLEAVNSNVAQLLIVSELTIAEEPAPEAALSFEDVAFTVERAAGEVCDRCRRIDPTTAERSYQAVICDHCASIVEENFADAVAEGFEEK.

A 'HIGH' region motif is present at residues 57 to 67 (PYANGNIHVGH). Position 554 (E554) interacts with L-isoleucyl-5'-AMP. The short motif at 595–599 (KMSKS) is the 'KMSKS' region element. K598 is an ATP binding site. Residues C888, C891, C908, and C911 each contribute to the Zn(2+) site.

Belongs to the class-I aminoacyl-tRNA synthetase family. IleS type 1 subfamily. Monomer. The cofactor is Zn(2+).

It localises to the cytoplasm. The catalysed reaction is tRNA(Ile) + L-isoleucine + ATP = L-isoleucyl-tRNA(Ile) + AMP + diphosphate. Its function is as follows. Catalyzes the attachment of isoleucine to tRNA(Ile). As IleRS can inadvertently accommodate and process structurally similar amino acids such as valine, to avoid such errors it has two additional distinct tRNA(Ile)-dependent editing activities. One activity is designated as 'pretransfer' editing and involves the hydrolysis of activated Val-AMP. The other activity is designated 'posttransfer' editing and involves deacylation of mischarged Val-tRNA(Ile). This Streptococcus pneumoniae serotype 19F (strain G54) protein is Isoleucine--tRNA ligase.